Reading from the N-terminus, the 243-residue chain is Probable enoyl-CoA hydratase echA6 (243 aa).

The protein belongs to the enoyl-CoA hydratase/isomerase family.

The catalysed reaction is a (3S)-3-hydroxyacyl-CoA = a (2E)-enoyl-CoA + H2O. It catalyses the reaction a 4-saturated-(3S)-3-hydroxyacyl-CoA = a (3E)-enoyl-CoA + H2O. Functionally, could possibly oxidize fatty acids using specific components. This is Probable enoyl-CoA hydratase echA6 (echA6) from Mycobacterium bovis (strain ATCC BAA-935 / AF2122/97).